We begin with the raw amino-acid sequence, 72 residues long: MAAKIKKGALVRVVKEKLENSLEAKASDSRFPSYLFDSKGEIIEMNDEYALIRFYVPTPSVWLRLDQLEAVE.

The protein belongs to the complex I NdhO subunit family. As to quaternary structure, NDH-1 can be composed of about 15 different subunits; different subcomplexes with different compositions have been identified which probably have different functions.

The protein resides in the cellular thylakoid membrane. The enzyme catalyses a plastoquinone + NADH + (n+1) H(+)(in) = a plastoquinol + NAD(+) + n H(+)(out). The catalysed reaction is a plastoquinone + NADPH + (n+1) H(+)(in) = a plastoquinol + NADP(+) + n H(+)(out). Its function is as follows. NDH-1 shuttles electrons from an unknown electron donor, via FMN and iron-sulfur (Fe-S) centers, to quinones in the respiratory and/or the photosynthetic chain. The immediate electron acceptor for the enzyme in this species is believed to be plastoquinone. Couples the redox reaction to proton translocation, and thus conserves the redox energy in a proton gradient. Cyanobacterial NDH-1 also plays a role in inorganic carbon-concentration. The chain is NAD(P)H-quinone oxidoreductase subunit O from Crocosphaera subtropica (strain ATCC 51142 / BH68) (Cyanothece sp. (strain ATCC 51142)).